A 567-amino-acid polypeptide reads, in one-letter code: Urease subunit alpha (567 aa).

A Urease domain is found at 128–567 (GGVDTHVHYI…LPLAQRYHLF (440 aa)). The Ni(2+) site is built by His-133, His-135, and Lys-216. Lys-216 bears the N6-carboxylysine mark. His-218 contacts substrate. Ni(2+)-binding residues include His-245 and His-271. His-319 (proton donor) is an active-site residue. Residue Asp-359 coordinates Ni(2+).

Belongs to the metallo-dependent hydrolases superfamily. Urease alpha subunit family. In terms of assembly, heterotrimer of UreA (gamma), UreB (beta) and UreC (alpha) subunits. Three heterotrimers associate to form the active enzyme. Ni cation serves as cofactor. In terms of processing, carboxylation allows a single lysine to coordinate two nickel ions.

It localises to the cytoplasm. The enzyme catalyses urea + 2 H2O + H(+) = hydrogencarbonate + 2 NH4(+). The protein operates within nitrogen metabolism; urea degradation; CO(2) and NH(3) from urea (urease route): step 1/1. In Pseudoalteromonas translucida (strain TAC 125), this protein is Urease subunit alpha.